The following is a 315-amino-acid chain: Energy-coupling factor transporter ATP-binding protein EcfA2 (315 aa).

Positions 31-275 (IILDNVSYTY…QELLSKIQIE (245 aa)) constitute an ABC transporter domain. 68–75 (GTTGSGKS) contributes to the ATP binding site.

The protein belongs to the ABC transporter superfamily. Energy-coupling factor EcfA family. As to quaternary structure, forms a stable energy-coupling factor (ECF) transporter complex composed of 2 membrane-embedded substrate-binding proteins (S component), 2 ATP-binding proteins (A component) and 2 transmembrane proteins (T component).

The protein localises to the cell membrane. ATP-binding (A) component of a common energy-coupling factor (ECF) ABC-transporter complex. Unlike classic ABC transporters this ECF transporter provides the energy necessary to transport a number of different substrates. The sequence is that of Energy-coupling factor transporter ATP-binding protein EcfA2 from Mesoplasma florum (strain ATCC 33453 / NBRC 100688 / NCTC 11704 / L1) (Acholeplasma florum).